The chain runs to 154 residues: Large-conductance mechanosensitive channel (154 aa).

The next 2 helical transmembrane spans lie at 12 to 32 (GNIV…ALIT) and 71 to 91 (IVLS…FLVV). The segment at 129–154 (NGAPSGRHVDTADLTPTPNHEPRADT) is disordered.

This sequence belongs to the MscL family. In terms of assembly, homopentamer.

The protein localises to the cell membrane. Its function is as follows. Channel that opens in response to stretch forces in the membrane lipid bilayer. May participate in the regulation of osmotic pressure changes within the cell. In Mycobacterium leprae (strain Br4923), this protein is Large-conductance mechanosensitive channel.